Consider the following 138-residue polypeptide: uncharacterized protein (138 aa).

It localises to the plastid. The protein resides in the chloroplast. This is an uncharacterized protein from Chlorella vulgaris (Green alga).